A 313-amino-acid polypeptide reads, in one-letter code: Ribose-phosphate pyrophosphokinase (313 aa).

ATP-binding positions include 37–39 and 96–97; these read DGE and RQ. Residues H131 and D170 each coordinate Mg(2+). K193 is a catalytic residue. D-ribose 5-phosphate is bound by residues R195, D219, and 223 to 227; that span reads DTAGT.

It belongs to the ribose-phosphate pyrophosphokinase family. Class I subfamily. As to quaternary structure, homohexamer. Mg(2+) serves as cofactor.

The protein resides in the cytoplasm. It carries out the reaction D-ribose 5-phosphate + ATP = 5-phospho-alpha-D-ribose 1-diphosphate + AMP + H(+). Its pathway is metabolic intermediate biosynthesis; 5-phospho-alpha-D-ribose 1-diphosphate biosynthesis; 5-phospho-alpha-D-ribose 1-diphosphate from D-ribose 5-phosphate (route I): step 1/1. In terms of biological role, involved in the biosynthesis of the central metabolite phospho-alpha-D-ribosyl-1-pyrophosphate (PRPP) via the transfer of pyrophosphoryl group from ATP to 1-hydroxyl of ribose-5-phosphate (Rib-5-P). The polypeptide is Ribose-phosphate pyrophosphokinase (Pseudomonas aeruginosa (strain ATCC 15692 / DSM 22644 / CIP 104116 / JCM 14847 / LMG 12228 / 1C / PRS 101 / PAO1)).